Here is a 553-residue protein sequence, read N- to C-terminus: Glutamate--tRNA ligase (553 aa).

The short motif at 41–51 (PSPTGFQHIGG) is the 'HIGH' region element. The 'KMSKS' region motif lies at 293–297 (KLSKR). Position 296 (Lys-296) interacts with ATP.

Belongs to the class-I aminoacyl-tRNA synthetase family. Glutamate--tRNA ligase type 1 subfamily. In terms of assembly, monomer.

Its subcellular location is the cytoplasm. The enzyme catalyses tRNA(Glu) + L-glutamate + ATP = L-glutamyl-tRNA(Glu) + AMP + diphosphate. In terms of biological role, catalyzes the attachment of glutamate to tRNA(Glu) in a two-step reaction: glutamate is first activated by ATP to form Glu-AMP and then transferred to the acceptor end of tRNA(Glu). The chain is Glutamate--tRNA ligase from Clostridium beijerinckii (strain ATCC 51743 / NCIMB 8052) (Clostridium acetobutylicum).